The following is a 765-amino-acid chain: Amine oxidase [copper-containing] 3 (765 aa).

Over 1-6 (MTQKTT) the chain is Cytoplasmic. Residues 7-27 (LVLLALAVITIFALVCVLLAG) form a helical; Signal-anchor for type II membrane protein membrane-spanning segment. Residues 28-765 (RSGDGGGLSQ…SHGGFAYRDN (738 aa)) are Extracellular-facing. Asn-137 carries an N-linked (GlcNAc...) asparagine glycan. A disulfide bridge connects residues Cys-198 and Cys-199. N-linked (GlcNAc...) asparagine glycosylation is found at Asn-232 and Asn-294. Asp-386 functions as the Proton acceptor in the catalytic mechanism. A disulfide bridge connects residues Cys-404 and Cys-430. Tyr-471 (schiff-base intermediate with substrate; via topaquinone) is an active-site residue. Residue Tyr-471 is modified to 2',4',5'-topaquinone. Positions 520 and 522 each coordinate Cu(2+). Ca(2+) is bound by residues Asp-529, Leu-530, Asp-531, and Glu-572. Asn-592 carries an N-linked (GlcNAc...) asparagine glycan. Residue Glu-641 participates in Ca(2+) binding. The N-linked (GlcNAc...) asparagine glycan is linked to Asn-659. Residue Phe-663 participates in Ca(2+) binding. Asn-666 carries an N-linked (GlcNAc...) asparagine glycan. Residues Glu-667, Asp-673, and Leu-674 each contribute to the Ca(2+) site. His-684 is a binding site for Cu(2+). Cys-734 and Cys-741 are disulfide-bonded.

This sequence belongs to the copper/topaquinone oxidase family. In terms of assembly, homodimer; disulfide-linked. Probably forms heterodimers with AOC2. Cu(2+) serves as cofactor. Requires Ca(2+) as cofactor. L-topaquinone is required as a cofactor. Post-translationally, topaquinone (TPQ) is generated by copper-dependent autoxidation of a specific tyrosyl residue. In terms of processing, N- and O-glycosylated.

It localises to the cell membrane. The catalysed reaction is methylamine + O2 + H2O = formaldehyde + H2O2 + NH4(+). It catalyses the reaction benzylamine + O2 + H2O = benzaldehyde + H2O2 + NH4(+). The enzyme catalyses 2-phenylethylamine + O2 + H2O = 2-phenylacetaldehyde + H2O2 + NH4(+). Its function is as follows. Catalyzes the oxidative deamination of primary amines to the corresponding aldehydes with the concomitant production of hydrogen peroxide and ammonia. Has a preference for the primary monoamines methylamine and benzylamine. Could also act on 2-phenylethylamine but much less efficiently. At endothelial cells surface can also function as a cell adhesion protein that participates in lymphocyte extravasation and recirculation by mediating the binding of lymphocytes to peripheral lymph node vascular endothelial cells in an L-selectin-independent fashion. The polypeptide is Amine oxidase [copper-containing] 3 (Mus musculus (Mouse)).